The following is a 694-amino-acid chain: MSDKRPRSPCSNNNDELNDSSVLTENMDTVATRSKNLPFHETYKSKPTPADKPYRVDGIDKYKELYEQSIRDPEGFWSQMARKELRWLRDFTKVRSSGTCLQDRLAWFLNGKLNVCDNCVDRWAEIQPNTTALIWEGDDPSSIRHISYIELFRNVCKMANVLKRFGIKKGDSVGIYMPMIPETIYTMLACARIGAVHMVVFAGFAAQNLLERLVNARCKIVVTADQGSRGKKIINLKDVVDKALEKIPEIKTCIVFRHLNGPIEFVKGRDFDGETLMRSEKPYCPLEDMDSEDPLFYLYTSGSTGTPKGVQHSTAGYLLYAAVTQKYLFNIHPGDIFGCAGDIGWITGHSYLVYAPLCNGITTLIFEGVPTYPNAGRYWEMVERHRITHFYAAPTAIRTLKRLGDDFVKKHDRSSLRVLGSVGEPINPSAWRWYHSVVGEERCSIVDTYWQTETGGIVIAPIPGCFDTKPGSATFPFFGIEPAILDPDTGKEIDGPGSGVLCIKNSWPGMFRGIFGAHYLHEIYTKPFPKYYFTGDGVLRDQDGYLWITGRIDDTINVSGHRLSSKEIEDALTNHFGIAEAAAVAIDHDVKGNALVCFVVLKDSGNRTFDLNNSSPHPFEYELRMCVRTQIGPVATPDHIIVVENIPKTRSGKVVRRLLRKIATGCNDYGDISTVANPECIKSIESSWAQYLKR.

The disordered stretch occupies residues 1–23; sequence MSDKRPRSPCSNNNDELNDSSVL. Over residues 9-23 the composition is skewed to polar residues; sequence PCSNNNDELNDSSVL. CoA-binding positions include 229 to 232 and threonine 347; that span reads RGKK. ATP contacts are provided by residues 423 to 425, 447 to 452, aspartate 536, and arginine 551; these read GEP and DTYWQT. Serine 559 lines the CoA pocket. ATP is bound at residue arginine 562. Arginine 628 contributes to the CoA binding site.

Belongs to the ATP-dependent AMP-binding enzyme family.

The enzyme catalyses acetate + ATP + CoA = acetyl-CoA + AMP + diphosphate. This is Acetyl-coenzyme A synthetase (ACS) from Cryptosporidium parvum.